Reading from the N-terminus, the 351-residue chain is Transmembrane protein 184 homolog DDB_G0279555 (351 aa).

Residues 1 to 21 traverse the membrane as a helical segment; the sequence is MWIVAGVCSGVAILLSFYLIY. The N-linked (GlcNAc...) asparagine glycan is linked to Asn-26. The next 5 helical transmembrane spans lie at 39–59, 73–93, 127–147, 162–182, and 206–226; these read ILIM…FVEL, YVLY…FDLV, FVLQ…VLET, YVWL…FLVL, and ILFF…FGVI. Asn-236 carries N-linked (GlcNAc...) asparagine glycosylation. A helical membrane pass occupies residues 241-261; it reads LQDFITCVEMVILAICHHFFF. Residues Asn-301 and Asn-304 are each glycosylated (N-linked (GlcNAc...) asparagine). Residues 327-351 are disordered; sequence HNHPTTKKKDEESNLLEPEDKDIII. The span at 339-351 shows a compositional bias: acidic residues; sequence SNLLEPEDKDIII.

This sequence belongs to the TMEM184 family.

The protein localises to the cell membrane. In terms of biological role, probable transporter. This is Transmembrane protein 184 homolog DDB_G0279555 (tmem184C) from Dictyostelium discoideum (Social amoeba).